We begin with the raw amino-acid sequence, 310 residues long: Homeobox protein Hox-A13a (310 aa).

The segment at residues 244–303 (GRKKRVPYTKVQLKELEREYATNKFITKDKRRRISAQTNLSERQVTIWFQNRRVKEKKVV) is a DNA-binding region (homeobox).

This sequence belongs to the Abd-B homeobox family.

Its subcellular location is the nucleus. Its function is as follows. Sequence-specific transcription factor which is part of a developmental regulatory system that provides cells with specific positional identities on the anterior-posterior axis. The polypeptide is Homeobox protein Hox-A13a (hoxa13a) (Danio rerio (Zebrafish)).